The primary structure comprises 175 residues: Large ribosomal subunit protein uL10 (175 aa).

The protein belongs to the universal ribosomal protein uL10 family. As to quaternary structure, part of the ribosomal stalk of the 50S ribosomal subunit. The N-terminus interacts with L11 and the large rRNA to form the base of the stalk. The C-terminus forms an elongated spine to which L12 dimers bind in a sequential fashion forming a multimeric L10(L12)X complex.

Forms part of the ribosomal stalk, playing a central role in the interaction of the ribosome with GTP-bound translation factors. The chain is Large ribosomal subunit protein uL10 from Alkalilimnicola ehrlichii (strain ATCC BAA-1101 / DSM 17681 / MLHE-1).